Consider the following 117-residue polypeptide: Large ribosomal subunit protein uL18 (117 aa).

This sequence belongs to the universal ribosomal protein uL18 family. As to quaternary structure, part of the 50S ribosomal subunit; part of the 5S rRNA/L5/L18/L25 subcomplex. Contacts the 5S and 23S rRNAs.

Its function is as follows. This is one of the proteins that bind and probably mediate the attachment of the 5S RNA into the large ribosomal subunit, where it forms part of the central protuberance. The chain is Large ribosomal subunit protein uL18 from Aliivibrio fischeri (strain MJ11) (Vibrio fischeri).